Here is a 392-residue protein sequence, read N- to C-terminus: NADH-quinone oxidoreductase subunit D (392 aa).

Belongs to the complex I 49 kDa subunit family. As to quaternary structure, NDH-1 is composed of 14 different subunits. Subunits NuoB, C, D, E, F, and G constitute the peripheral sector of the complex.

It is found in the cell inner membrane. The enzyme catalyses a quinone + NADH + 5 H(+)(in) = a quinol + NAD(+) + 4 H(+)(out). NDH-1 shuttles electrons from NADH, via FMN and iron-sulfur (Fe-S) centers, to quinones in the respiratory chain. The immediate electron acceptor for the enzyme in this species is believed to be ubiquinone. Couples the redox reaction to proton translocation (for every two electrons transferred, four hydrogen ions are translocated across the cytoplasmic membrane), and thus conserves the redox energy in a proton gradient. This Rhodospirillum rubrum (strain ATCC 11170 / ATH 1.1.1 / DSM 467 / LMG 4362 / NCIMB 8255 / S1) protein is NADH-quinone oxidoreductase subunit D.